The chain runs to 1027 residues: Fibril-forming collagen alpha chain (1027 aa).

Residues 1–12 (YRAGPRYIQAQV) are nonhelical region (N-terminal). Positions 1-1027 (YRAGPRYIQA…GPPGNSDYGA (1027 aa)) are disordered. The segment at 13–1023 (GPIGPRGPPG…PGPPGPPGNS (1011 aa)) is triple-helical region. The segment covering 17–26 (PRGPPGPPGS) has biased composition (pro residues). Residues Pro-21 and Pro-24 each carry the 4-hydroxyproline; partial modification. 2 positions are modified to 4-hydroxyproline: Pro-27 and Pro-39. Residue Pro-53 is modified to 3-hydroxyproline; partial. Pro-54 carries the post-translational modification 4-hydroxyproline. The span at 63–72 (SGDDGRDGEP) shows a compositional bias: basic and acidic residues. Pro-72 is modified (4-hydroxyproline; partial). Residues 73–91 (GPRGGIGPMGPRGAGGMPG) are compositionally biased toward gly residues. 4-hydroxyproline occurs at positions 90 and 93. Lys-96 and Lys-108 each carry 5-hydroxylysine. O-linked (Gal...) hydroxylysine glycans are attached at residues Lys-96 and Lys-108. Residues Pro-123 and Pro-128 each carry the 4-hydroxyproline; partial modification. A 4-hydroxyproline modification is found at Pro-150. Pro-161 is modified (3-hydroxyproline; partial). Pro-162 is modified (4-hydroxyproline). Pro-164 carries the post-translational modification 3-hydroxyproline; partial. 4-hydroxyproline occurs at positions 165, 174, 177, and 180. The segment covering 168 to 182 (IGSTGSPGFPGTPGS) has biased composition (low complexity). 5-hydroxylysine occurs at positions 183 and 192. O-linked (Gal...) hydroxylysine glycosylation is present at Lys-192. Residues Pro-207, Pro-216, Pro-219, Pro-228, and Pro-237 each carry the 4-hydroxyproline modification. Positions 227 to 249 (EPGASGESGLPGPSGFPGPRGMP) are enriched in low complexity. Residue Pro-243 is modified to 4-hydroxyproline; partial. Residues Pro-249 and Pro-255 each carry the 4-hydroxyproline modification. Residues 259–268 (GAKGDGGPTG) show a composition bias toward gly residues. Lys-261 carries the 5-hydroxylysine modification. A glycan (O-linked (Gal...) hydroxylysine) is linked at Lys-261. A 4-hydroxyproline; partial mark is found at Pro-273 and Pro-276. Lys-279 is modified (5-hydroxylysine). Lys-279 carries O-linked (Gal...) hydroxylysine glycosylation. Pro-285, Pro-291, and Pro-303 each carry 4-hydroxyproline; partial. 5 positions are modified to 4-hydroxyproline: Pro-306, Pro-312, Pro-321, Pro-327, and Pro-339. The residue at position 342 (Lys-342) is a 5-hydroxylysine. A 4-hydroxyproline; partial modification is found at Pro-348. Lys-351 carries the 5-hydroxylysine; partial modification. 4-hydroxyproline is present on residues Pro-366, Pro-372, and Pro-375. Basic and acidic residues predominate over residues 380–396 (RPGKDGRPGIRGKDGKQ). A 4-hydroxyproline; partial modification is found at Pro-381. Pro-387 is subject to 4-hydroxyproline. A compositionally biased stretch (low complexity) spans 398–420 (EQGPQGPQGLAGLQGRAGPPGAR). At Pro-416 the chain carries 3-hydroxyproline; partial. A 4-hydroxyproline mark is found at Pro-417, Pro-423, Pro-429, and Pro-432. The segment covering 437-446 (EQGDAGKDGE) has biased composition (basic and acidic residues). The span at 447–480 (TGAAGPPGAAGPTGARGPPGPRGQQGFQGLAGAQ) shows a compositional bias: low complexity. 4-hydroxyproline occurs at positions 453, 465, and 483. A 4-hydroxyproline; partial mark is found at Pro-500, Pro-503, and Pro-506. Residues 502 to 511 (GPAGPGGERG) are compositionally biased toward gly residues. Residues Pro-513 and Pro-525 each carry the 4-hydroxyproline modification. Positions 527 to 543 (ERGATGPAGPTGSPGVA) are enriched in low complexity. 4-hydroxyproline; partial occurs at positions 533 and 536. Position 540 is a 4-hydroxyproline (Pro-540). Lys-546 carries the post-translational modification 5-hydroxylysine. A 3-hydroxyproline; partial modification is found at Pro-551. Pro-552 and Pro-561 each carry 4-hydroxyproline. Residues Lys-567 and Lys-573 each carry the 5-hydroxylysine modification. The O-linked (Gal...) hydroxylysine glycan is linked to Lys-573. A compositionally biased stretch (basic and acidic residues) spans 575-599 (SRGDIGPRGKAGERGKDGERGERGE). Position 603 is a 4-hydroxyproline (Pro-603). A 5-hydroxylysine modification is found at Lys-612. Lys-612 carries O-linked (Gal...) hydroxylysine glycosylation. A 4-hydroxyproline; partial modification is found at Pro-621. The residue at position 627 (Pro-627) is a 4-hydroxyproline. Positions 635–644 (PAGSQGIQGQ) are enriched in low complexity. Pro-645 carries the 4-hydroxyproline; partial modification. Pro-647 is modified (3-hydroxyproline; partial). Pro-648 is subject to 4-hydroxyproline. Lys-657 is subject to 5-hydroxylysine. Residue Lys-657 is glycosylated (O-linked (Gal...) hydroxylysine). 4-hydroxyproline occurs at positions 663, 708, 711, 714, 717, and 723. The span at 698–710 (ETGAQGEIGLPGS) shows a compositional bias: low complexity. The segment covering 714-726 (PGLPGPSGQPGPS) has biased composition (pro residues). Residue Lys-738 is modified to 5-hydroxylysine. Lys-738 carries O-linked (Gal...) hydroxylysine glycosylation. Residues Pro-744 and Pro-759 each carry the 4-hydroxyproline modification. The span at 750–771 (QGDRGSDGEPGRDGTKGERGED) shows a compositional bias: basic and acidic residues. At Lys-765 the chain carries 5-hydroxylysine. A glycan (O-linked (Gal...) hydroxylysine) is linked at Lys-765. Pro-773 carries the post-translational modification 3-hydroxyproline; partial. Pro-774, Pro-783, and Pro-792 each carry 4-hydroxyproline. A compositionally biased stretch (gly residues) spans 802 to 814 (GPMGGQGMKGDGG). Lys-810 is modified (5-hydroxylysine). A glycan (O-linked (Gal...) hydroxylysine) is linked at Lys-810. Pro-815 carries the 3-hydroxyproline; partial modification. Residues Pro-816, Pro-843, Pro-849, Pro-855, Pro-861, Pro-867, Pro-888, Pro-894, Pro-903, and Pro-915 each carry the 4-hydroxyproline modification. Residues 828–848 (AGPQGPTGPSGQAGAPGQEGA) are compositionally biased toward low complexity. Positions 884-894 (QRGLPGAAGPP) are enriched in low complexity. Residues 911-927 (PVGAPGSQGPAGIMGMK) are compositionally biased toward low complexity. Lys-927 is subject to 5-hydroxylysine. Lys-927 carries an O-linked (Gal...) hydroxylysine glycan. Residue Lys-933 is modified to 5-hydroxylysine; partial. Lys-936 and Lys-939 each carry 5-hydroxylysine. An O-linked (Gal...) hydroxylysine glycan is attached at Lys-936. Low complexity predominate over residues 942-962 (TGLPGLQGLQGTPGHSGESGP). A 4-hydroxyproline modification is found at Pro-945. Pro-954 is subject to 4-hydroxyproline; partial. A 4-hydroxyproline mark is found at Pro-963 and Pro-966. Positions 973–982 (GEAGGRGSQG) are enriched in gly residues. The segment covering 983-1001 (PPGKDGQPGPSGRVGPRGP) has biased composition (low complexity). A 4-hydroxyproline mark is found at Pro-984 and Pro-990. At Pro-1010 the chain carries 3-hydroxyproline; partial. Residues 1010–1020 (PPGPPGPPGPP) are compositionally biased toward pro residues. Pro-1011 carries the post-translational modification 4-hydroxyproline. Residue Pro-1013 is modified to 3-hydroxyproline; partial. 4-hydroxyproline is present on Pro-1014. Pro-1016 carries the 3-hydroxyproline; partial modification. Pro-1017 is modified (4-hydroxyproline). Pro-1019 is modified (3-hydroxyproline; partial). Residue Pro-1020 is modified to 4-hydroxyproline. Residues 1024-1027 (DYGA) form a nonhelical region (C-terminal) region.

As to quaternary structure, homotetramer.

Its subcellular location is the secreted. The protein localises to the extracellular space. It localises to the extracellular matrix. In terms of biological role, fibril-forming collagen. This Riftia pachyptila (Vent tube worm) protein is Fibril-forming collagen alpha chain.